A 209-amino-acid chain; its full sequence is Small ribosomal subunit protein uS4 (209 aa).

The tract at residues 23-46 (SRNPLLKKPHPPGQHGMQRKKKSD) is disordered. The region spanning 93-156 (CRLDNMVYRM…RKLQSVQESL (64 aa)) is the S4 RNA-binding domain.

It belongs to the universal ribosomal protein uS4 family. As to quaternary structure, part of the 30S ribosomal subunit. Contacts protein S5. The interaction surface between S4 and S5 is involved in control of translational fidelity.

Functionally, one of the primary rRNA binding proteins, it binds directly to 16S rRNA where it nucleates assembly of the body of the 30S subunit. Its function is as follows. With S5 and S12 plays an important role in translational accuracy. The chain is Small ribosomal subunit protein uS4 from Chlamydia felis (strain Fe/C-56) (Chlamydophila felis).